A 498-amino-acid polypeptide reads, in one-letter code: Glycerol kinase (498 aa).

An ADP-binding site is contributed by T12. Residues T12, T13, and S14 each contribute to the ATP site. T12 is a binding site for sn-glycerol 3-phosphate. R16 is an ADP binding site. R82, E83, Y135, and D245 together coordinate sn-glycerol 3-phosphate. The glycerol site is built by R82, E83, Y135, D245, and Q246. ADP is bound by residues T267 and G310. Residues T267, G310, Q314, and G411 each contribute to the ATP site. Positions 411 and 415 each coordinate ADP.

The protein belongs to the FGGY kinase family. Homotetramer and homodimer (in equilibrium).

It catalyses the reaction glycerol + ATP = sn-glycerol 3-phosphate + ADP + H(+). It participates in polyol metabolism; glycerol degradation via glycerol kinase pathway; sn-glycerol 3-phosphate from glycerol: step 1/1. Activated by phosphorylation and inhibited by fructose 1,6-bisphosphate (FBP). In terms of biological role, key enzyme in the regulation of glycerol uptake and metabolism. Catalyzes the phosphorylation of glycerol to yield sn-glycerol 3-phosphate. The protein is Glycerol kinase of Clostridium botulinum (strain Alaska E43 / Type E3).